The primary structure comprises 831 residues: Cadherin-related family member 5 (831 aa).

The first 28 residues, 1–28 (MGAPALLWPSLLLPWLTVLFGQPPGTLA), serve as a signal peptide directing secretion. Residues 29–641 (QTQVCSVNQT…GQRFSTVDMA (613 aa)) are Extracellular-facing. Asn-36, Asn-45, Asn-84, Asn-135, Asn-143, Asn-173, Asn-201, Asn-287, Asn-311, Asn-408, and Asn-475 each carry an N-linked (GlcNAc...) asparagine glycan. 4 Cadherin domains span residues 53–125 (VNIF…DNAP), 128–240 (SFEI…TPWF), 252–357 (IHAQ…PLQF), and 358–459 (SQSL…ERER). Residues 452 to 632 (IQVSERERTP…STGAGEQGDG (181 aa)) are disordered. Polar residues predominate over residues 473–491 (SSNTTMEAPLTSGTSQRPA). The span at 505–540 (GGTTLRPPTPASSIPGGSPTLGTSTSPQTTTPGGDS) shows a compositional bias: low complexity. Residues 541–554 (AQTPKPGTSHPTAP) are compositionally biased toward polar residues. A run of 2 repeats spans residues 541-571 (AQTP…RSDS) and 572-602 (TQTP…SGSS). The interval 541–614 (AQTPKPGTSH…TPKPGTSQST (74 aa)) is 3 X 31 AA approximate tandem repeats. Positions 555–572 (TSRTSTSLMTTSSRSDST) are enriched in low complexity. Polar residues-rich tracts occupy residues 573–582 (QTPKPGTSQP) and 589–623 (ASTS…SLPS). The 3; truncated repeat unit spans residues 605–614 (TPKPGTSQST). A helical transmembrane segment spans residues 642–662 (VLGGVLGALLLLALICLVILV). Topologically, residues 663–831 (HKHYRHRLAC…FGVDADNTYI (169 aa)) are cytoplasmic. Positions 663-831 (HKHYRHRLAC…FGVDADNTYI (169 aa)) are mediates interaction with USH1C and MYO7B and is required for proper localization to microvilli tips and function in microvilli organization. Disordered regions lie at residues 675–774 (GKAS…GGYK) and 793–831 (EPTA…NTYI). 3 positions are modified to phosphoserine: Ser-699, Ser-721, and Ser-725. Pro residues predominate over residues 716–738 (PLRPPSPMSSSPTPPSSTPPSPQ). A Phosphothreonine modification is found at Thr-728. Phosphoserine occurs at positions 736 and 753. Over residues 761–771 (LTKERRPEGEG) the composition is skewed to basic and acidic residues. Thr-795 bears the Phosphothreonine mark. A compositionally biased stretch (low complexity) spans 797–807 (DVDSASASGSE). Phosphoserine is present on residues Ser-802, Ser-804, and Ser-806.

Part of the IMAC/intermicrovillar adhesion complex/intermicrovillar tip-link complex composed of ANKS4B, MYO7B, USH1C, CDHR2 and CDHR5. Interacts (via cytoplasmic domain) with USH1C and MYO7B; required for proper localization of CDHR5 to microvilli tips and its function in brush border differentiation. N- and O-glycosylated.

It is found in the apical cell membrane. Its subcellular location is the cell projection. The protein resides in the microvillus membrane. Intermicrovillar adhesion molecule that forms, via its extracellular domain, calcium-dependent heterophilic complexes with CDHR2 on adjacent microvilli. Thereby, controls the packing of microvilli at the apical membrane of epithelial cells. Through its cytoplasmic domain, interacts with microvillus cytoplasmic proteins to form the intermicrovillar adhesion complex/IMAC. This complex plays a central role in microvilli and epithelial brush border differentiation. The polypeptide is Cadherin-related family member 5 (Mus musculus (Mouse)).